A 1171-amino-acid chain; its full sequence is MSLRFVIGRAGSGKSTLCLHEVQEELKQRPRGETILYLVPEQMTFQTQQALIGSEDVRGSIRAQVFSFSRLAWKVLQEVGGASRLHIDEAGVHMLLRKIVESRKDGLSVFQKAAEQNGFFEHLGSMIAEFKRYNVTPSNVYEMWQQLDAHSSSAEQKLLANKVYDLQLLYDDFERALIGKYLDSEDYLQLLVEKLPQSEYVKGAEIYIDGFHSFSPQELEIVRQLMICGARVTITLTIDEKTLAQPVNELDLFYETTLTYEKIKQVAREEKIEIEKTIPLMEQPRFHSPALAHLEKHYEARPNEKFHGEASVTIRTAANLRAEVEGVAREIRRLVADEDYRYRDIAVLLRNGESYYDVMRTLFTDYNIPHFIDEKRPMSHHPLVECIRSALEIISGNWRYDAVFRCVKTELLYPLDVRKETMREEMDEFENYCLAYGVQGKRWTSEDPWMYRRYRSLDDTNGMITDSEREMEEKINRLRDVVRTPVIRMQKRLKRAGTVMQMCEAVYLFLEELDVPKKLEALRIRAEESGDFLFATDHEQVWEEVMSLLDTFVEMLGEEKMSLSMFTDVMSTGLEALQFANIPPSLDQVLIANIDRSRLSNVKATFVIGVNEGVIPAAPMDEGMLSDEERDVLSAAGIELAPTTRQTLLEEQFVMYQMVTRATEKLYISCPLADEEGKTLLASSFIKKIKRMFPDVKDTFITNDVNDLSRSEQILYVATPEVTLSYVMQQLQTWKRYGFEGNLDFWWDVYNFYVTSDEWKQKSSRVLSSLFYRNRAQKLSTAVSRDLYGDKIKGSVSRMELFNRCAYAHFAQHGLSLRERDIFKLDAPDIGELFHAALKRIADRLLRENRTWADLSIKECEHLSTVVIEEIAPLLQRQILLSSNRHFYLKQKLQQIIFRTSIILREHAKSSGFVPVDLEVPFGMGGTGSLPPMEFSLPNGVKMEVVGRIDRVDKAEDENGTFLRIIDYKSSSKALDLTEVYYGLALQMLTYLDVVTSNAHTWMKKGHAASPAGVLYFHIHNPIVEVKGDASEAEIEKEILKKFKMKGLVLGDADVVRLMDNKLSTGSSDIISAGLKKDGSFSARSSIASEQEFNVLQKYVHHTFENIGKDITEGVIDIAPYKKGNKAACTFCNFKSVCQFDESLEDNQFRTLKDMKDSEAMEKIREEVGGE.

The 390-residue stretch at 1 to 390 folds into the UvrD-like helicase ATP-binding domain; the sequence is MSLRFVIGRA…HPLVECIRSA (390 aa). ATP is bound at residue 8–15; sequence GRAGSGKS. Residues 281–587 form the UvrD-like helicase C-terminal domain; it reads MEQPRFHSPA…QFANIPPSLD (307 aa). Residues C805, C1129, C1132, and C1138 each contribute to the [4Fe-4S] cluster site.

It belongs to the helicase family. AddB/RexB type 1 subfamily. Heterodimer of AddA and AddB. Mg(2+) serves as cofactor. The cofactor is [4Fe-4S] cluster.

The heterodimer acts as both an ATP-dependent DNA helicase and an ATP-dependent, dual-direction single-stranded exonuclease. Recognizes the chi site generating a DNA molecule suitable for the initiation of homologous recombination. The AddB subunit has 5' -&gt; 3' nuclease activity but not helicase activity. This is ATP-dependent helicase/deoxyribonuclease subunit B from Bacillus cereus (strain ZK / E33L).